Here is a 412-residue protein sequence, read N- to C-terminus: Phosphoribosylamine--glycine ligase (412 aa).

One can recognise an ATP-grasp domain in the interval 108 to 309 (KSIMKKYGVP…LAQAIIDILA (202 aa)). Position 134–190 (134–190 (LDEKGVPLVIKADGLAAGKGVTVAFDIETAKSALADIFSGSQGKVVIEEFLDGEEFS)) interacts with ATP. The Mg(2+) site is built by glutamate 279 and asparagine 281.

The protein belongs to the GARS family. Mg(2+) is required as a cofactor. Mn(2+) serves as cofactor.

It catalyses the reaction 5-phospho-beta-D-ribosylamine + glycine + ATP = N(1)-(5-phospho-beta-D-ribosyl)glycinamide + ADP + phosphate + H(+). The protein operates within purine metabolism; IMP biosynthesis via de novo pathway; N(1)-(5-phospho-D-ribosyl)glycinamide from 5-phospho-alpha-D-ribose 1-diphosphate: step 2/2. The protein is Phosphoribosylamine--glycine ligase of Lactococcus lactis subsp. lactis (strain IL1403) (Streptococcus lactis).